A 393-amino-acid chain; its full sequence is Formate-dependent phosphoribosylglycinamide formyltransferase (393 aa).

N(1)-(5-phospho-beta-D-ribosyl)glycinamide contacts are provided by residues 22 to 23 (EL) and Glu-82. Residues Arg-114, Lys-155, 160-165 (SSGHGQ), 195-198 (EGFI), and Glu-203 each bind ATP. The ATP-grasp domain occupies 119–308 (RLAAEELGLK…QFALHARAIL (190 aa)). 2 residues coordinate Mg(2+): Glu-267 and Glu-279. Residues Asp-286, Lys-356, and 363–364 (RR) contribute to the N(1)-(5-phospho-beta-D-ribosyl)glycinamide site.

It belongs to the PurK/PurT family. As to quaternary structure, homodimer.

The catalysed reaction is N(1)-(5-phospho-beta-D-ribosyl)glycinamide + formate + ATP = N(2)-formyl-N(1)-(5-phospho-beta-D-ribosyl)glycinamide + ADP + phosphate + H(+). The protein operates within purine metabolism; IMP biosynthesis via de novo pathway; N(2)-formyl-N(1)-(5-phospho-D-ribosyl)glycinamide from N(1)-(5-phospho-D-ribosyl)glycinamide (formate route): step 1/1. Involved in the de novo purine biosynthesis. Catalyzes the transfer of formate to 5-phospho-ribosyl-glycinamide (GAR), producing 5-phospho-ribosyl-N-formylglycinamide (FGAR). Formate is provided by PurU via hydrolysis of 10-formyl-tetrahydrofolate. This is Formate-dependent phosphoribosylglycinamide formyltransferase from Actinobacillus pleuropneumoniae serotype 3 (strain JL03).